Here is a 165-residue protein sequence, read N- to C-terminus: Pyruvoyl-dependent arginine decarboxylase 1 (165 aa).

S45 is subject to Pyruvic acid (Ser).

The protein belongs to the PdaD family. Pyruvate serves as cofactor.

It catalyses the reaction L-arginine + H(+) = agmatine + CO2. The sequence is that of Pyruvoyl-dependent arginine decarboxylase 1 (pdaD1) from Methanosarcina mazei (strain ATCC BAA-159 / DSM 3647 / Goe1 / Go1 / JCM 11833 / OCM 88) (Methanosarcina frisia).